The sequence spans 284 residues: 4-hydroxybenzoate octaprenyltransferase (284 aa).

Transmembrane regions (helical) follow at residues 19-39, 42-62, 85-105, 107-127, 134-154, 165-185, 211-231, 233-253, and 261-281; these read IPILLILWPTLTALVLASHGL, ISYLVIFTIGVVVMRTVGCII, GQLSIKNAIWLCISLTLVAFI, VLFLNLYTILLSFVALFLAIL, FFAIPQLILGLAFNFGIFMAF, AWIFYIATICWTIAYDTIYAL, ILLFNFLSLLLLIILGIYCDF, SFFYLGVVICSLFFVRNYFLY, and CINAFSANHWIGLIIFIIAVI.

This sequence belongs to the UbiA prenyltransferase family. Mg(2+) is required as a cofactor.

The protein resides in the cell inner membrane. The enzyme catalyses all-trans-octaprenyl diphosphate + 4-hydroxybenzoate = 4-hydroxy-3-(all-trans-octaprenyl)benzoate + diphosphate. It participates in cofactor biosynthesis; ubiquinone biosynthesis. In terms of biological role, catalyzes the prenylation of para-hydroxybenzoate (PHB) with an all-trans polyprenyl group. Mediates the second step in the final reaction sequence of ubiquinone-8 (UQ-8) biosynthesis, which is the condensation of the polyisoprenoid side chain with PHB, generating the first membrane-bound Q intermediate 3-octaprenyl-4-hydroxybenzoate. This is 4-hydroxybenzoate octaprenyltransferase from Francisella tularensis subsp. tularensis (strain FSC 198).